Reading from the N-terminus, the 439-residue chain is MPWAALLAGMHATVSPSRVRGRARAPPSKSYTHRALLAAGYADGETVVRDPLVSADTRATARAVELLGGAAARENGDWVVTGFGSRPAIPDAVIDCANSGTTMRLVTAAAALADGTTVLTGDESLRARPHGPLLDALSGLGGTARSTRGNGQAPLVVDGPVSGGSVALPGDVSSQFVTALLMAGAVTETGIETDLTTELKSAPYVDITLDVLDAFGVGASETAAGYRVRGGQAYAPSGAEYAVPGDFSSASYLLAAGALAAADGAAVVVEGMHPSAQGDAAIVDVLERMGADIDWDTESGVITVQRSELSGVEVGVADTPDLLPTIAVLGAAADGTTRITDAEHVRYKETDRVAAMAESLSKLGASVEERPDELVVRGGDTELSGASVDGRGDHRLVMALAVAGLVADGETTIAGSEHVDVSFPDFFEVLAGLGADTDG.

Positions 29, 30, and 34 each coordinate 3-phosphoshikimate. A phosphoenolpyruvate-binding site is contributed by K29. Residues G100 and R128 each coordinate phosphoenolpyruvate. 3-phosphoshikimate is bound by residues S173, S174, Q175, S201, D321, and K348. Residue Q175 coordinates phosphoenolpyruvate. The active-site Proton acceptor is D321. Residues R352 and R395 each coordinate phosphoenolpyruvate.

Belongs to the EPSP synthase family. In terms of assembly, monomer.

The protein localises to the cytoplasm. It catalyses the reaction 3-phosphoshikimate + phosphoenolpyruvate = 5-O-(1-carboxyvinyl)-3-phosphoshikimate + phosphate. It participates in metabolic intermediate biosynthesis; chorismate biosynthesis. Catalyzes the transfer of the enolpyruvyl moiety of phosphoenolpyruvate (PEP) to the 5-hydroxyl of shikimate-3-phosphate (S3P) to produce enolpyruvyl shikimate-3-phosphate and inorganic phosphate. The sequence is that of 3-phosphoshikimate 1-carboxyvinyltransferase from Halobacterium salinarum (strain ATCC 700922 / JCM 11081 / NRC-1) (Halobacterium halobium).